A 91-amino-acid chain; its full sequence is Succinate dehydrogenase assembly factor 1A, mitochondrial (91 aa).

It belongs to the complex I LYR family. SDHAF1 subfamily. In terms of assembly, interacts with the iron-sulfur protein subunit within the SDH catalytic dimer.

Its subcellular location is the mitochondrion matrix. Functionally, plays an essential role in the assembly of succinate dehydrogenase (SDH), an enzyme complex (also referred to as respiratory complex II) that is a component of both the tricarboxylic acid (TCA) cycle and the mitochondrial electron transport chain, and which couples the oxidation of succinate to fumarate with the reduction of ubiquinone (coenzyme Q) to ubiquinol. Promotes maturation of the iron-sulfur protein subunit of the SDH catalytic dimer, protecting it from the deleterious effects of oxidants. May act together with SDHAF3. This chain is Succinate dehydrogenase assembly factor 1A, mitochondrial, found in Dictyostelium discoideum (Social amoeba).